Here is a 215-residue protein sequence, read N- to C-terminus: MSKVYDWFEERLEIQAIADDITSKYVPPHVNIFYCLGGITLTCFLVQVATGFAMTFYYRPTVTEAFSSVQYIMTEANFGWLIRSVHRWSASMMVLMMILHVFRVYLTGGFKKPRELTWVTGVVLAVLTASFGVTGYSLPWDQIGYWAVKIVTGVPEAIPIIGSPLVELLRGSASVGQSTLTRFYSLHTFVLPLLTAVFMLMHFPMIRKQGISGPL.

Residues 32–52 traverse the membrane as a helical segment; the sequence is IFYCLGGITLTCFLVQVATGF. Cys35 contributes to the heme c binding site. Residues His86 and His100 each contribute to the heme b site. The next 3 membrane-spanning stretches (helical) occupy residues 90-110, 116-136, and 186-206; these read ASMM…TGGF, LTWV…VTGY, and LHTF…FPMI. Heme b-binding residues include His187 and His202.

Belongs to the cytochrome b family. PetB subfamily. The 4 large subunits of the cytochrome b6-f complex are cytochrome b6, subunit IV (17 kDa polypeptide, PetD), cytochrome f and the Rieske protein, while the 4 small subunits are PetG, PetL, PetM and PetN. The complex functions as a dimer. The cofactor is heme b. Heme c is required as a cofactor.

It localises to the plastid. The protein resides in the chloroplast thylakoid membrane. In terms of biological role, component of the cytochrome b6-f complex, which mediates electron transfer between photosystem II (PSII) and photosystem I (PSI), cyclic electron flow around PSI, and state transitions. This Phalaenopsis aphrodite subsp. formosana (Moth orchid) protein is Cytochrome b6.